Consider the following 103-residue polypeptide: Small ribosomal subunit protein uS10 (103 aa).

Belongs to the universal ribosomal protein uS10 family. As to quaternary structure, part of the 30S ribosomal subunit.

In terms of biological role, involved in the binding of tRNA to the ribosomes. This is Small ribosomal subunit protein uS10 from Polynucleobacter necessarius subsp. necessarius (strain STIR1).